Consider the following 497-residue polypeptide: Serine hydroxymethyltransferase (497 aa).

(6S)-5,6,7,8-tetrahydrofolate contacts are provided by residues leucine 176 and 180–182; that span reads GHL. Lysine 289 is subject to N6-(pyridoxal phosphate)lysine.

It belongs to the SHMT family. In terms of assembly, homodimer. It depends on pyridoxal 5'-phosphate as a cofactor.

It localises to the cytoplasm. The catalysed reaction is (6R)-5,10-methylene-5,6,7,8-tetrahydrofolate + glycine + H2O = (6S)-5,6,7,8-tetrahydrofolate + L-serine. It functions in the pathway one-carbon metabolism; tetrahydrofolate interconversion. Its pathway is amino-acid biosynthesis; glycine biosynthesis; glycine from L-serine: step 1/1. Its function is as follows. Catalyzes the reversible interconversion of serine and glycine with tetrahydrofolate (THF) serving as the one-carbon carrier. This reaction serves as the major source of one-carbon groups required for the biosynthesis of purines, thymidylate, methionine, and other important biomolecules. Also exhibits THF-independent aldolase activity toward beta-hydroxyamino acids, producing glycine and aldehydes, via a retro-aldol mechanism. The protein is Serine hydroxymethyltransferase of Chlamydia abortus (strain DSM 27085 / S26/3) (Chlamydophila abortus).